A 361-amino-acid polypeptide reads, in one-letter code: Putative dual-specificity RNA methyltransferase RlmN (361 aa).

The active-site Proton acceptor is the Glu-91. A Radical SAM core domain is found at 97 to 329; it reads QHYGLSVCVT…KKKGVNCVVR (233 aa). 3 residues coordinate [4Fe-4S] cluster: Cys-111, Cys-115, and Cys-118. Residues 163–164, Ser-195, 218–220, and Thr-296 each bind S-adenosyl-L-methionine; these read GE and SLH.

It belongs to the radical SAM superfamily. RlmN family. [4Fe-4S] cluster is required as a cofactor.

Its subcellular location is the cytoplasm. The enzyme catalyses adenosine(2503) in 23S rRNA + 2 reduced [2Fe-2S]-[ferredoxin] + 2 S-adenosyl-L-methionine = 2-methyladenosine(2503) in 23S rRNA + 5'-deoxyadenosine + L-methionine + 2 oxidized [2Fe-2S]-[ferredoxin] + S-adenosyl-L-homocysteine. It carries out the reaction adenosine(37) in tRNA + 2 reduced [2Fe-2S]-[ferredoxin] + 2 S-adenosyl-L-methionine = 2-methyladenosine(37) in tRNA + 5'-deoxyadenosine + L-methionine + 2 oxidized [2Fe-2S]-[ferredoxin] + S-adenosyl-L-homocysteine. Functionally, specifically methylates position 2 of adenine 2503 in 23S rRNA and position 2 of adenine 37 in tRNAs. This Streptococcus pneumoniae (strain CGSP14) protein is Putative dual-specificity RNA methyltransferase RlmN.